Here is a 128-residue protein sequence, read N- to C-terminus: Holo-[acyl-carrier-protein] synthase (128 aa).

Residues Asp8 and Glu57 each coordinate Mg(2+).

Belongs to the P-Pant transferase superfamily. AcpS family. The cofactor is Mg(2+).

The protein resides in the cytoplasm. The catalysed reaction is apo-[ACP] + CoA = holo-[ACP] + adenosine 3',5'-bisphosphate + H(+). Its function is as follows. Transfers the 4'-phosphopantetheine moiety from coenzyme A to a Ser of acyl-carrier-protein. The polypeptide is Holo-[acyl-carrier-protein] synthase (Syntrophus aciditrophicus (strain SB)).